A 372-amino-acid polypeptide reads, in one-letter code: C-X-C chemokine receptor type 5 (372 aa).

Residues 1-55 lie on the Extracellular side of the membrane; it reads MNYPLTLEMDLENLEDLFWELDRLDNYNDTSLVENHLCPATEGPLMASFKAVFVP. Asparagine 28 is a glycosylation site (N-linked (GlcNAc...) asparagine). A helical transmembrane segment spans residues 56–76; it reads VAYSLIFLLGVIGNVLVLVIL. Residues 77–88 lie on the Cytoplasmic side of the membrane; that stretch reads ERHRQTRSSTET. A helical transmembrane segment spans residues 89-109; it reads FLFHLAVADLLLVFILPFAVA. Over 110-124 the chain is Extracellular; it reads EGSVGWVLGTFLCKT. Cysteine 122 and cysteine 202 form a disulfide bridge. A helical transmembrane segment spans residues 125–145; it reads VIALHKVNFYCSSLLLACIAV. Topologically, residues 146–167 are cytoplasmic; the sequence is DRYLAIVHAVHAYRHRRLLSIH. Residues 168-188 traverse the membrane as a helical segment; the sequence is ITCGTIWLVGFLLALPEILFA. Residues 189-219 lie on the Extracellular side of the membrane; the sequence is KVSQGHHNNSLPRCTFSQENQAETHAWFTSR. Residue asparagine 196 is glycosylated (N-linked (GlcNAc...) asparagine). A helical membrane pass occupies residues 220–240; the sequence is FLYHVAGFLLPMLVMGWCYVG. The Cytoplasmic portion of the chain corresponds to 241–259; sequence VVHRLRQAQRRPQRQKAVR. Residues 260–280 form a helical membrane-spanning segment; sequence VAILVTSIFFLCWSPYHIVIF. Over 281–304 the chain is Extracellular; the sequence is LDTLARLKAVDNTCKLNGSLPVAI. The chain crosses the membrane as a helical span at residues 305-325; that stretch reads TMCEFLGLAHCCLNPMLYTFA. The Cytoplasmic portion of the chain corresponds to 326 to 372; it reads GVKFRSDLSRLLTKLGCTGPASLCQLFPSWRRSSLSESENATSLTTF.

The protein belongs to the G-protein coupled receptor 1 family. In terms of tissue distribution, expression in mature B-cells and Burkitt lymphoma cells.

It is found in the cell membrane. In terms of biological role, cytokine receptor that binds to B-lymphocyte chemoattractant (BLC). Involved in B-cell migration into B-cell follicles of spleen and Peyer patches but not into those of mesenteric or peripheral lymph nodes. May have a regulatory function in Burkitt lymphoma (BL) lymphomagenesis and/or B-cell differentiation. In Homo sapiens (Human), this protein is C-X-C chemokine receptor type 5 (CXCR5).